A 348-amino-acid chain; its full sequence is Eukaryotic translation initiation factor 3 subunit H (348 aa).

A disordered region spans residues 1-25; it reads MASRKEGSGAAGGGFGASKGKGKAA. Over residues 9-19 the composition is skewed to gly residues; that stretch reads GAAGGGFGASK. Residues 35-169 form the MPN domain; the sequence is VQIDGLVVLK…LKAYRLTPKL (135 aa). Residues 266–285 show a composition bias toward low complexity; it reads QQQQKHQYQQRRQQENLQRQ. A disordered region spans residues 266 to 304; the sequence is QQQQKHQYQQRRQQENLQRQSRGEAPLPEEDINKLFKPP.

This sequence belongs to the eIF-3 subunit H family. As to quaternary structure, component of the eukaryotic translation initiation factor 3 (eIF-3) complex, which is composed of 13 subunits: EIF3A, EIF3B, EIF3C, EIF3D, EIF3E, EIF3F, EIF3G, EIF3H, EIF3I, EIF3J, EIF3K, EIF3L and EIF3M.

The protein localises to the cytoplasm. Functionally, component of the eukaryotic translation initiation factor 3 (eIF-3) complex, which is involved in protein synthesis of a specialized repertoire of mRNAs and, together with other initiation factors, stimulates binding of mRNA and methionyl-tRNAi to the 40S ribosome. The eIF-3 complex specifically targets and initiates translation of a subset of mRNAs involved in cell proliferation. The polypeptide is Eukaryotic translation initiation factor 3 subunit H (Gallus gallus (Chicken)).